A 133-amino-acid chain; its full sequence is Stage III sporulation protein AD (133 aa).

3 helical membrane passes run 2-22 (QIDIVQIVGLGLIATFLSLIV), 29-49 (FAFLIVVFAGCAIFLYLVDQI), and 108-128 (ILILVMAVPILTVIIETILGL).

Its subcellular location is the cell membrane. The sequence is that of Stage III sporulation protein AD (spoIIIAD) from Bacillus subtilis (strain 168).